Here is a 459-residue protein sequence, read N- to C-terminus: Putrescine aminotransferase (459 aa).

Pyridoxal 5'-phosphate-binding positions include 150–151 (GT) and Q274. An N6-(pyridoxal phosphate)lysine modification is found at K300. T332 lines the pyridoxal 5'-phosphate pocket.

This sequence belongs to the class-III pyridoxal-phosphate-dependent aminotransferase family. Putrescine aminotransferase subfamily. Pyridoxal 5'-phosphate is required as a cofactor.

It carries out the reaction an alkane-alpha,omega-diamine + 2-oxoglutarate = an omega-aminoaldehyde + L-glutamate. The catalysed reaction is putrescine + 2-oxoglutarate = 1-pyrroline + L-glutamate + H2O. It catalyses the reaction cadaverine + 2-oxoglutarate = 5-aminopentanal + L-glutamate. Its pathway is amine and polyamine degradation; putrescine degradation; 4-aminobutanal from putrescine (transaminase route): step 1/1. Functionally, catalyzes the aminotransferase reaction from putrescine to 2-oxoglutarate, leading to glutamate and 4-aminobutanal, which spontaneously cyclizes to form 1-pyrroline. This is the first step in one of two pathways for putrescine degradation, where putrescine is converted into 4-aminobutanoate (gamma-aminobutyrate or GABA) via 4-aminobutanal. Also functions as a cadaverine transaminase in a a L-lysine degradation pathway to succinate that proceeds via cadaverine, glutarate and L-2-hydroxyglutarate. The polypeptide is Putrescine aminotransferase (Enterobacter sp. (strain 638)).